Reading from the N-terminus, the 819-residue chain is DNA topoisomerase 4 subunit A (819 aa).

The Topo IIA-type catalytic domain maps to Leu30–Leu496. Tyr118 serves as the catalytic O-(5'-phospho-DNA)-tyrosine intermediate.

The protein belongs to the type II topoisomerase GyrA/ParC subunit family. ParC type 2 subfamily. In terms of assembly, heterotetramer composed of ParC and ParE.

It is found in the cell membrane. It catalyses the reaction ATP-dependent breakage, passage and rejoining of double-stranded DNA.. Its function is as follows. Topoisomerase IV is essential for chromosome segregation. It relaxes supercoiled DNA. Performs the decatenation events required during the replication of a circular DNA molecule. The chain is DNA topoisomerase 4 subunit A from Streptococcus pyogenes serotype M3 (strain ATCC BAA-595 / MGAS315).